Reading from the N-terminus, the 429-residue chain is SET domain-containing protein 8 (429 aa).

The 216-residue stretch at 17 to 232 (KQITIKKIRK…ENEEVTINYG (216 aa)) folds into the SET domain.

It belongs to the class V-like SAM-binding methyltransferase superfamily.

Its subcellular location is the cytoplasm. The protein localises to the nucleus. This Schizosaccharomyces pombe (strain 972 / ATCC 24843) (Fission yeast) protein is SET domain-containing protein 8 (set8).